Here is a 333-residue protein sequence, read N- to C-terminus: Ketol-acid reductoisomerase (NADP(+)) (333 aa).

The 171-residue stretch at M1–T171 folds into the KARI N-terminal Rossmann domain. NADP(+) contacts are provided by residues Y14–Q17, R37, T42, and D72–Q75. The active site involves H97. An NADP(+)-binding site is contributed by G123. Positions T172–L317 constitute a KARI C-terminal knotted domain. 4 residues coordinate Mg(2+): D180, E184, E216, and E220. Substrate is bound at residue S241.

Belongs to the ketol-acid reductoisomerase family. Mg(2+) serves as cofactor.

The catalysed reaction is (2R)-2,3-dihydroxy-3-methylbutanoate + NADP(+) = (2S)-2-acetolactate + NADPH + H(+). It carries out the reaction (2R,3R)-2,3-dihydroxy-3-methylpentanoate + NADP(+) = (S)-2-ethyl-2-hydroxy-3-oxobutanoate + NADPH + H(+). Its pathway is amino-acid biosynthesis; L-isoleucine biosynthesis; L-isoleucine from 2-oxobutanoate: step 2/4. It functions in the pathway amino-acid biosynthesis; L-valine biosynthesis; L-valine from pyruvate: step 2/4. In terms of biological role, involved in the biosynthesis of branched-chain amino acids (BCAA). Catalyzes an alkyl-migration followed by a ketol-acid reduction of (S)-2-acetolactate (S2AL) to yield (R)-2,3-dihydroxy-isovalerate. In the isomerase reaction, S2AL is rearranged via a Mg-dependent methyl migration to produce 3-hydroxy-3-methyl-2-ketobutyrate (HMKB). In the reductase reaction, this 2-ketoacid undergoes a metal-dependent reduction by NADPH to yield (R)-2,3-dihydroxy-isovalerate. The sequence is that of Ketol-acid reductoisomerase (NADP(+)) from Xanthomonas euvesicatoria pv. vesicatoria (strain 85-10) (Xanthomonas campestris pv. vesicatoria).